We begin with the raw amino-acid sequence, 93 residues long: PqqA binding protein (93 aa).

It belongs to the PqqD family. In terms of assembly, monomer. Interacts with PqqE.

Its pathway is cofactor biosynthesis; pyrroloquinoline quinone biosynthesis. In terms of biological role, functions as a PqqA binding protein and presents PqqA to PqqE, in the pyrroloquinoline quinone (PQQ) biosynthetic pathway. This is PqqA binding protein from Methylococcus capsulatus (strain ATCC 33009 / NCIMB 11132 / Bath).